The sequence spans 364 residues: Histidinol-phosphate aminotransferase (364 aa).

Lysine 222 bears the N6-(pyridoxal phosphate)lysine mark.

This sequence belongs to the class-II pyridoxal-phosphate-dependent aminotransferase family. Histidinol-phosphate aminotransferase subfamily. In terms of assembly, homodimer. Requires pyridoxal 5'-phosphate as cofactor.

The catalysed reaction is L-histidinol phosphate + 2-oxoglutarate = 3-(imidazol-4-yl)-2-oxopropyl phosphate + L-glutamate. The protein operates within amino-acid biosynthesis; L-histidine biosynthesis; L-histidine from 5-phospho-alpha-D-ribose 1-diphosphate: step 7/9. In Brevibacillus brevis (strain 47 / JCM 6285 / NBRC 100599), this protein is Histidinol-phosphate aminotransferase.